The sequence spans 852 residues: Pentatricopeptide repeat-containing protein At5g02830, chloroplastic (852 aa).

Residues 1–25 (MRDFVIVFGSSSAITNPHHHHRRCY) constitute a chloroplast transit peptide. Positions 17–60 (PHHHHRRCYATAPESNRKTKSNSSFTKLLPSLPQQHSPSPASVS) are disordered. Over residues 44-58 (LLPSLPQQHSPSPAS) the composition is skewed to low complexity. 8 PPR repeats span residues 334-364 (DMTSYNILLKTCCLAGRVDLAQDIYKEAKRM), 373-407 (DAFTYCTIIKVFADAKMWKWALKVKDDMKSVGVTP), 408-442 (NTHTWSSLISACANAGLVEQANHLFEEMLASGCEP), 443-477 (NSQCFNILLHACVEACQYDRAFRLFQSWKGSSVNE), 525-557 (TTATYNILLKACGTDYYRGKELMDEMKSLGLSP), 558-592 (NQITWSTLIDMCGGSGDVEGAVRILRTMHSAGTRP), 593-627 (DVVAYTTAIKICAENKCLKLAFSLFEEMRRYQIKP), and 628-665 (NWVTYNTLLKARSKYGSLLEVRQCLAIYQDMRNAGYKP).

This sequence belongs to the PPR family. P subfamily.

It localises to the plastid. The protein resides in the chloroplast. The polypeptide is Pentatricopeptide repeat-containing protein At5g02830, chloroplastic (Arabidopsis thaliana (Mouse-ear cress)).